The chain runs to 412 residues: MGLLRTIALVILGFSAFIFTVLFGRLPVFRKTPIGLLHRIIWLHIPHGISYIDARLFNGRILRSWGQAGNYILYENHPLVLIFFTTILVIGELIFIPSAWPRISVMHQLYIPIIIALPYYFLYVSVVTKSYITPDNHAEEMKRYPYDKVIFHPGHSCETCHFLKPARSKHCSYCKRCVSRQDHHCIWLTNCVGLNNYHYFLYLLLSLSVMLTYGSWLGYSLLSQTLDRLIPPSSPVRLRKQSWPTFLNMWAAVVAYDTRIGGVTMLMFMTAPLAFAFLVYHVYLIWAGMTTNESAKWSDWKDDITDGMAFKFIGDHKRSDSPLLESAETADSWPGYSDQILVLTEGDPPKEGHQVHKSSNDVIQPTNPDAPIDRRFARVRSMKEIDNIYDLGFWNNLCHVFGNYAAGKAHRA.

At 1-2 the chain is on the lumenal side; it reads MG. A helical transmembrane segment spans residues 3–23; that stretch reads LLRTIALVILGFSAFIFTVLF. At 24–78 the chain is on the cytoplasmic side; that stretch reads GRLPVFRKTPIGLLHRIIWLHIPHGISYIDARLFNGRILRSWGQAGNYILYENHP. A helical membrane pass occupies residues 79-99; sequence LVLIFFTTILVIGELIFIPSA. The Lumenal portion of the chain corresponds to 100-107; that stretch reads WPRISVMH. The helical transmembrane segment at 108 to 128 threads the bilayer; sequence QLYIPIIIALPYYFLYVSVVT. The Cytoplasmic portion of the chain corresponds to 129–198; sequence KSYITPDNHA…TNCVGLNNYH (70 aa). Residues 155–205 enclose the DHHC domain; it reads HSCETCHFLKPARSKHCSYCKRCVSRQDHHCIWLTNCVGLNNYHYFLYLLL. Residues 199-219 form a helical membrane-spanning segment; it reads YFLYLLLSLSVMLTYGSWLGY. Topologically, residues 220-265 are lumenal; it reads SLLSQTLDRLIPPSSPVRLRKQSWPTFLNMWAAVVAYDTRIGGVTM. Residues 266-286 traverse the membrane as a helical segment; the sequence is LMFMTAPLAFAFLVYHVYLIW. Over 287–412 the chain is Cytoplasmic; that stretch reads AGMTTNESAK…NYAAGKAHRA (126 aa).

This sequence belongs to the DHHC palmitoyltransferase family. SWF1 subfamily.

It localises to the endoplasmic reticulum membrane. It catalyses the reaction L-cysteinyl-[protein] + hexadecanoyl-CoA = S-hexadecanoyl-L-cysteinyl-[protein] + CoA. Its function is as follows. Palmitoyltransferase that targets several endosomal SNAREs. Palmitoylates the SNAREs at cysteine residues close to the cytoplasmic end of their transmembrane domain. May have a role in the cellular quality control of transmembrane domain-containing proteins. The protein is Palmitoyltransferase swf1 (swf1) of Emericella nidulans (strain FGSC A4 / ATCC 38163 / CBS 112.46 / NRRL 194 / M139) (Aspergillus nidulans).